Consider the following 339-residue polypeptide: S-adenosylmethionine:tRNA ribosyltransferase-isomerase (339 aa).

Belongs to the QueA family. In terms of assembly, monomer.

Its subcellular location is the cytoplasm. The catalysed reaction is 7-aminomethyl-7-carbaguanosine(34) in tRNA + S-adenosyl-L-methionine = epoxyqueuosine(34) in tRNA + adenine + L-methionine + 2 H(+). The protein operates within tRNA modification; tRNA-queuosine biosynthesis. Functionally, transfers and isomerizes the ribose moiety from AdoMet to the 7-aminomethyl group of 7-deazaguanine (preQ1-tRNA) to give epoxyqueuosine (oQ-tRNA). The chain is S-adenosylmethionine:tRNA ribosyltransferase-isomerase from Campylobacter fetus subsp. fetus (strain 82-40).